Reading from the N-terminus, the 624-residue chain is Serine/threonine-protein kinase ppk35 (624 aa).

A Protein kinase domain is found at 162–465 (FDLLVKLGQG…TIEIQKHPFF (304 aa)). Residues 168–176 (LGQGGYGSV) and K191 contribute to the ATP site. D285 acts as the Proton acceptor in catalysis. The AGC-kinase C-terminal domain occupies 466–548 (KRLHWNGLRK…KYRPNARKPL (83 aa)). Positions 545-559 (RKPLVGRHREKRQLR) are enriched in basic residues. The interval 545-617 (RKPLVGRHRE…VHRLLERKGK (73 aa)) is disordered. The span at 560 to 574 (KEKPEKKNNSTKQKD) shows a compositional bias: basic and acidic residues. Basic residues predominate over residues 596–609 (SKTKGHKTKSSRVH).

Belongs to the protein kinase superfamily. Ser/Thr protein kinase family.

The protein localises to the cytoplasm. It localises to the nucleus. The protein resides in the nucleolus. It carries out the reaction L-seryl-[protein] + ATP = O-phospho-L-seryl-[protein] + ADP + H(+). The enzyme catalyses L-threonyl-[protein] + ATP = O-phospho-L-threonyl-[protein] + ADP + H(+). Functionally, has a role in meiosis. The sequence is that of Serine/threonine-protein kinase ppk35 (ppk35) from Schizosaccharomyces pombe (strain 972 / ATCC 24843) (Fission yeast).